Here is a 630-residue protein sequence, read N- to C-terminus: DNA topoisomerase 4 subunit B (630 aa).

Residues Tyr-5, Asn-42, Asp-69, 110-116 (GLHGVGI), and Lys-334 contribute to the ATP site. The Toprim domain maps to 412 to 525 (TELFLVEGDS…HGHVYVALPP (114 aa)). Mg(2+)-binding residues include Glu-418, Asp-490, and Asp-492.

This sequence belongs to the type II topoisomerase family. ParE type 1 subfamily. Heterotetramer composed of ParC and ParE. Mg(2+) is required as a cofactor. The cofactor is Mn(2+). Requires Ca(2+) as cofactor.

It carries out the reaction ATP-dependent breakage, passage and rejoining of double-stranded DNA.. Pyrrolopyrimidines inhibit both GyrB and its paralog in topoisomerase IV (parE). Functionally, topoisomerase IV is essential for chromosome segregation; it is the principal protein responsible for decatenating newly replicated chromosomes. It relaxes supercoiled DNA. MukB stimulates the relaxation activity of topoisomerase IV and also has a modest effect on decatenation. The chain is DNA topoisomerase 4 subunit B from Escherichia coli (strain K12).